Consider the following 118-residue polypeptide: Large ribosomal subunit protein bL20 (118 aa).

This sequence belongs to the bacterial ribosomal protein bL20 family.

Its function is as follows. Binds directly to 23S ribosomal RNA and is necessary for the in vitro assembly process of the 50S ribosomal subunit. It is not involved in the protein synthesizing functions of that subunit. The chain is Large ribosomal subunit protein bL20 from Lactobacillus johnsonii (strain CNCM I-12250 / La1 / NCC 533).